The chain runs to 130 residues: Chemotaxis protein CheY-3 (130 aa).

A Response regulatory domain is found at 10–127 (KILIVDDFST…TLKEKLDKIF (118 aa)). 4 residues coordinate Mg(2+): aspartate 15, aspartate 16, aspartate 60, and asparagine 62. Aspartate 60 is subject to 4-aspartylphosphate.

Interacts with FliM. Mg(2+) is required as a cofactor.

Its subcellular location is the cytoplasm. Its function is as follows. Acts as a response regulator to control chemotaxis. Involved in the transmission of sensory signals from the chemoreceptors to the flagellar motors. Switches the flagellar rotation by binding to the flagellar motor switch protein FliM. In its active (phosphorylated or acetylated) form, exhibits enhanced binding to a switch component, FliM, at the flagellar motor which induces a change from counterclockwise to clockwise flagellar rotation. The chain is Chemotaxis protein CheY-3 from Vibrio cholerae serotype O1 (strain ATCC 39315 / El Tor Inaba N16961).